Here is a 411-residue protein sequence, read N- to C-terminus: Putative competence-damage inducible protein (411 aa).

It belongs to the CinA family.

This Clostridium acetobutylicum (strain ATCC 824 / DSM 792 / JCM 1419 / IAM 19013 / LMG 5710 / NBRC 13948 / NRRL B-527 / VKM B-1787 / 2291 / W) protein is Putative competence-damage inducible protein.